Consider the following 194-residue polypeptide: Holliday junction branch migration complex subunit RuvA (194 aa).

The interval M1–L64 is domain I. The interval R65–P140 is domain II. The interval P140–Q144 is flexible linker. Residues L145–R194 form a domain III region.

Belongs to the RuvA family. Homotetramer. Forms an RuvA(8)-RuvB(12)-Holliday junction (HJ) complex. HJ DNA is sandwiched between 2 RuvA tetramers; dsDNA enters through RuvA and exits via RuvB. An RuvB hexamer assembles on each DNA strand where it exits the tetramer. Each RuvB hexamer is contacted by two RuvA subunits (via domain III) on 2 adjacent RuvB subunits; this complex drives branch migration. In the full resolvosome a probable DNA-RuvA(4)-RuvB(12)-RuvC(2) complex forms which resolves the HJ.

Its subcellular location is the cytoplasm. Its function is as follows. The RuvA-RuvB-RuvC complex processes Holliday junction (HJ) DNA during genetic recombination and DNA repair, while the RuvA-RuvB complex plays an important role in the rescue of blocked DNA replication forks via replication fork reversal (RFR). RuvA specifically binds to HJ cruciform DNA, conferring on it an open structure. The RuvB hexamer acts as an ATP-dependent pump, pulling dsDNA into and through the RuvAB complex. HJ branch migration allows RuvC to scan DNA until it finds its consensus sequence, where it cleaves and resolves the cruciform DNA. The protein is Holliday junction branch migration complex subunit RuvA of Xanthomonas oryzae pv. oryzae (strain MAFF 311018).